A 413-amino-acid chain; its full sequence is Endoplasmic reticulum resident protein 44.2 (413 aa).

The first 21 residues, 1-21 (MNLASVLLLLAACHLSVSVNG), serve as a signal peptide directing secretion. The Thioredoxin domain maps to 22 to 136 (QEHKEAIELS…LTNFVKFQLS (115 aa)). The cysteines at positions 184 and 233 are disulfide-linked. N-linked (GlcNAc...) asparagine glycosylation occurs at N264. The tract at residues 367 to 413 (KAARGITDDHEAQAPSTRPIDTTPPPSVFKELKPSDKRYSILQKSEL) is disordered. The span at 396–413 (KELKPSDKRYSILQKSEL) shows a compositional bias: basic and acidic residues. The Prevents secretion from ER signature appears at 410 to 413 (KSEL).

The protein localises to the endoplasmic reticulum lumen. The polypeptide is Endoplasmic reticulum resident protein 44.2 (Caenorhabditis elegans).